Reading from the N-terminus, the 492-residue chain is MQVTETLNSGLKREIKITVPAGDMEAKLMARLSDARNKVRINGFRPGKVPVQHLRKVYGKSFMAEVVNEILNDSTRSIITGRGEKAAMQPEVIMTEDEKEAEKILAGGTDFEFRLNYEVIPAIEIKDFSDIKVTRQVFDVPDAEIDDQVKRVAESARSYEPKTGKAAEGDRVSIDYVGKIDGEAFAGGAGTDQLLVLGSKEFIPGFEDQLIGTKAGDEKQVTVTFPENYQAAHLAGKEATFDVTVKEVSKPGELEINDETAKNLGLESLERLREIVRGQIENQFGSMTRQKVKRQLLDQLDAAYSFEAPSKLIDAEFNNIWAQVTRDLEAAGRTFADEETTEEEARAEYLRLAERRVRLGLVLAEIGEKAGVTVSDEELQRGLFEQVRRFPANQQQEAFEFYRSNPEALNALRAPMFEEKVVDHLLGQISVTDVKVSKEELMADDEDAETTTKAKPAKKAAAKKAEAKANEDEAEEPKKKAAPKKKAAKDAE.

Residues 169 to 254 enclose the PPIase FKBP-type domain; that stretch reads GDRVSIDYVG…VKEVSKPGEL (86 aa). The interval 441 to 492 is disordered; the sequence is LMADDEDAETTTKAKPAKKAAAKKAEAKANEDEAEEPKKKAAPKKKAAKDAE. The segment covering 463-479 has biased composition (basic and acidic residues); the sequence is KKAEAKANEDEAEEPKK. Residues 480-492 show a composition bias toward basic residues; sequence KAAPKKKAAKDAE.

This sequence belongs to the FKBP-type PPIase family. Tig subfamily.

It localises to the cytoplasm. The enzyme catalyses [protein]-peptidylproline (omega=180) = [protein]-peptidylproline (omega=0). In terms of biological role, involved in protein export. Acts as a chaperone by maintaining the newly synthesized protein in an open conformation. Functions as a peptidyl-prolyl cis-trans isomerase. This chain is Trigger factor, found in Mesorhizobium japonicum (strain LMG 29417 / CECT 9101 / MAFF 303099) (Mesorhizobium loti (strain MAFF 303099)).